The sequence spans 402 residues: UPF0261 protein y4oU (402 aa).

Belongs to the UPF0261 family.

This is UPF0261 protein y4oU from Sinorhizobium fredii (strain NBRC 101917 / NGR234).